A 200-amino-acid polypeptide reads, in one-letter code: Large ribosomal subunit protein uL4 (200 aa).

The segment at 43–70 (RAQKTRAEVSGSGKKPWRQKGTGRARSG) is disordered.

It belongs to the universal ribosomal protein uL4 family. Part of the 50S ribosomal subunit.

In terms of biological role, one of the primary rRNA binding proteins, this protein initially binds near the 5'-end of the 23S rRNA. It is important during the early stages of 50S assembly. It makes multiple contacts with different domains of the 23S rRNA in the assembled 50S subunit and ribosome. Its function is as follows. Forms part of the polypeptide exit tunnel. The chain is Large ribosomal subunit protein uL4 from Glaesserella parasuis serovar 5 (strain SH0165) (Haemophilus parasuis).